We begin with the raw amino-acid sequence, 111 residues long: Small ribosomal subunit protein uS17 (111 aa).

It belongs to the universal ribosomal protein uS17 family. Part of the 30S ribosomal subunit.

Functionally, one of the primary rRNA binding proteins, it binds specifically to the 5'-end of 16S ribosomal RNA. In Methanocella arvoryzae (strain DSM 22066 / NBRC 105507 / MRE50), this protein is Small ribosomal subunit protein uS17.